The following is a 478-amino-acid chain: 3-isopropylmalate dehydratase large subunit (478 aa).

The [4Fe-4S] cluster site is built by Cys-357, Cys-418, and Cys-421.

The protein belongs to the aconitase/IPM isomerase family. LeuC type 1 subfamily. Heterodimer of LeuC and LeuD. It depends on [4Fe-4S] cluster as a cofactor.

It catalyses the reaction (2R,3S)-3-isopropylmalate = (2S)-2-isopropylmalate. It participates in amino-acid biosynthesis; L-leucine biosynthesis; L-leucine from 3-methyl-2-oxobutanoate: step 2/4. Its function is as follows. Catalyzes the isomerization between 2-isopropylmalate and 3-isopropylmalate, via the formation of 2-isopropylmaleate. The sequence is that of 3-isopropylmalate dehydratase large subunit from Novosphingobium aromaticivorans (strain ATCC 700278 / DSM 12444 / CCUG 56034 / CIP 105152 / NBRC 16084 / F199).